The following is a 108-amino-acid chain: Protein S100-A15A (108 aa).

One can recognise an EF-hand domain in the interval 53–88 (KEPYYITELFQAADKNKDNQICFDEFLYILGKLVKD). Asp66, Asn68, Asp70, Gln72, and Glu77 together coordinate Ca(2+).

It belongs to the S-100 family.

In Pongo abelii (Sumatran orangutan), this protein is Protein S100-A15A (S100A15A).